A 680-amino-acid polypeptide reads, in one-letter code: Pilus tip adhesin Cpa (680 aa).

Positions 62 to 211 (CFNLTKHFPS…IFQSSDKTFQ (150 aa)) form a cross-link, isoglutamyl cysteine thioester (Cys-Gln). The segment at 217–236 (EYVPDTPPKPGEEPPAKTEK) is disordered. Basic and acidic residues predominate over residues 226–236 (PGEEPPAKTEK). The isoaspartyl lysine isopeptide (Lys-Asp) cross-link spans 243 to 546 (KYAEGDYSKL…ELIDVISMED (304 aa)). The region spanning 253-311 (LEGATLKLAQIEGSGFQEKIFDSNKSGEKVELPNGTYVLSELKPPQGYGVATPITFKVA) is the CNA-B domain. Positions 374-526 (CFNADLHSPP…FFVPNSSRYQ (153 aa)) form a cross-link, isoglutamyl cysteine thioester (Cys-Gln). Positions 562 to 667 (KTVTGTIADK…KEDETVAFEN (106 aa)) form a cross-link, isoaspartyl lysine isopeptide (Lys-Asn). Residues 672–676 (VPPTG) carry the VPPTG sorting signal motif. T675 participates in a covalent cross-link: Threonyl lysine isopeptide (Thr-Lys) (interchain with K-? in major pilin subunit). Positions 676–680 (GLTTD) are cleaved as a propeptide — removed by sortase.

In terms of assembly, monomer. Proteolytically processed and assembled in pili through a transpeptidation reaction catalyzed by a sortase, which leads to a covalent link between Cpa and a major pilin subunit.

The protein resides in the fimbrium. Functionally, component of the pilus tip. Can bind covalently, via its two reactive thioester bonds, to molecular targets from host cell surface and can thus mediate adhesion of the streptococcal pili to host cells. Lysine side chains or a carbohydrate with a free amine group might be candidates for Cpa binding. In vitro, can covalently bind to spermidine, but it is unlikely that spermidine is the natural target of Cpa. The sequence is that of Pilus tip adhesin Cpa (cpa) from Streptococcus pyogenes.